A 347-amino-acid chain; its full sequence is MAPQAHDRDKALDLALAQIDKNFGKGSVMRLGEGVRQPIAVIPTGSIALDVALGIGGLPRGRVVEIYGPESSGKTTVALHAVANAQAAGGIAAFIDAEHALDPDYAQKLGVDTDALLVSQPDTGEQALEIADMLIRSGALDILVVDSVAALVPRAEIEGEMGDSHVGLQARLMSQALRKMTGALSNSGTTAIFINQLREKIGVMFGSPETTTGGKALKFYSSVRLDVRRIETLKDGTDAVGNRTRVKVVKNKVAPPFKQAEFDILYGLGISKEGSLIDMGVEHGFIRKSGSWYTYEGDQLGQGKENARKFLLENTDIRDEIEKKIKEKLGIGADVTAATDDAAPVEF.

68-75 contributes to the ATP binding site; the sequence is GPESSGKT.

Belongs to the RecA family.

The protein resides in the cytoplasm. In terms of biological role, can catalyze the hydrolysis of ATP in the presence of single-stranded DNA, the ATP-dependent uptake of single-stranded DNA by duplex DNA, and the ATP-dependent hybridization of homologous single-stranded DNAs. It interacts with LexA causing its activation and leading to its autocatalytic cleavage. The protein is Protein RecA of Rhodococcus jostii (strain RHA1).